Consider the following 770-residue polypeptide: Signal transducer and activator of transcription 3 (770 aa).

The residue at position 2 (alanine 2) is an N-acetylalanine. An N6-acetyllysine mark is found at lysine 49 and lysine 87. An Essential for nuclear import motif is present at residues 150–162; it reads DVRKRVQDLEQKM. One can recognise an SH2 domain in the interval 580–670; it reads WNEGYIMGFI…DATNILVSPL (91 aa). Allysine; alternate is present on residues lysine 601, lysine 615, and lysine 631. Lysine 601, lysine 615, and lysine 631 each carry N6-acetyllysine; alternate. The residue at position 640 (tyrosine 640) is a Phosphotyrosine; by TYK2. Lysine 685 carries the allysine; alternate modification. Position 685 is an N6-acetyllysine; alternate (lysine 685). Tyrosine 705 is modified (phosphotyrosine; by FER and PTK6). Lysine 707 carries the N6-acetyllysine modification. Threonine 714 is subject to Phosphothreonine. A Phosphoserine; by DYRK2, NLK, NEK6, IRAK1, RPS6KA5, ZIPK/DAPK3 and PKC/PRKCE modification is found at serine 727.

The protein belongs to the transcription factor STAT family. As to quaternary structure, forms a homodimer or a heterodimer with a related family member (at least STAT1). Component of a promoter-binding complex composed of STAT3, NFATC3 and NFATC4; complex formation is enhanced by calcineurin. Interacts with IL31RA, NCOA1, PELP1, SIPAR, SOCS7, STATIP1 and TMF1. Interacts with IL23R in presence of IL23. Interacts (via SH2 domain) with NLK. Interacts with ARL2BP; the interaction is enhanced by LIF and JAK1 expression. Interacts with KPNA4 and KPNA5; KPNA4 may be the primary mediator of nuclear import. Interacts with CAV2; the interaction is increased on insulin-induced tyrosine phosphorylation of CAV2 and leads to STAT3 activation. Interacts with ARL2BP; interaction is enhanced with ARL2. Interacts with NEK6. Binds to CDK9 when activated and nuclear. Interacts with BMX. Interacts with ZIPK/DAPK3. Interacts with PIAS3; the interaction occurs on stimulation by IL6, CNTF or OSM and inhibits the DNA binding activity of STAT3. In prostate cancer cells, interacts with PRKCE and promotes DNA binding activity of STAT3. Interacts with STMN3, antagonizing its microtubule-destabilizing activity. Interacts with the 'Lys-129' acetylated form of BIRC5/survivin. Interacts with FER. Interacts (via SH2 domain) with EIF2AK2/PKR (via the kinase catalytic domain). Interacts with FGFR4. Interacts with INPP5F; the interaction is independent of STAT3 Tyr-705 phosphorylation status. Interacts with OCIAD1. Interacts with OCIAD2. Interacts (unphosphorylated or phosphorylated at Ser-727) with PHB1. Interacts and may form heterodimers with NHLH1. Found in a complex with SLC39A6, SLC39A10 and with the 'Ser-727' phosphorylated form of STAT3 throughout mitosis. Interacts (when acetylated) with EP300 (via bromo domain); interaction takes place following STAT3 acetylation by EP300 and promotes enhanceosome assembly. Interacts (when acetylated) with BRD2 (via bromo domain); interaction promotes STAT3 recruitment to chromatin and T-helper Th17 cell differentiation. Interacts with FAM220A/SIPAR; the interaction occurs in both the nucleus and the cytoplasm, is enhanced by IL6 and promotes STAT3 dephosphorylation. Interacts in both unphosphorylated and phosphorylated forms with FAM220A but interacts preferentially in the phosphorylated form in the nucleus. Interacts with PTPN2; the interaction is promoted by FAM220A and leads to STAT3 dephosphorylation which negatively regulates STAT3 transcriptional activator activity. In terms of processing, activated through tyrosine phosphorylation by BMX. Tyrosine phosphorylated in response to IL6, IL11, CNTF, LIF, KITLG/SCF, CSF1, EGF, PDGF, IFN-alpha, LEP and OSM. Activated KIT promotes phosphorylation on tyrosine residues and subsequent translocation to the nucleus. Tyrosine phosphorylated in response to constitutively activated FGFR1, FGFR2, FGFR3 and FGFR4. Phosphorylated on serine upon DNA damage, probably by ATM or ATR. Serine phosphorylation is important for the formation of stable DNA-binding STAT3 homodimers and maximal transcriptional activity. ARL2BP may participate in keeping the phosphorylated state of STAT3 within the nucleus. Tyrosine phosphorylated upon stimulation with EGF. Upon LPS challenge, phosphorylated within the nucleus by IRAK1. Upon UV-A treatment, phosphorylated on Ser-727 by RPS6KA5. Dephosphorylation on tyrosine residues by PTPN2 negatively regulates IL6/interleukin-6 signaling. Phosphorylation at Tyr-705 by PTK6, isoform M2 of PKM (PKM2) or FER leads to an increase of its transcriptional activity. Phosphorylation at Tyr-705 is increased in the presence of calcineurin. Phosphorylation at Tyr-640 by TYK2 negatively regulates transcriptional activity. Post-translationally, acetylated on lysine residues by EP300/p300, promoting its activation. Acetylation at Lys-49 and Lys-87 by EP300/p300 promotes its activation. Acetylation at Lys-87 by EP300/p300 promotes its association with BRD2 and recruitment to chromatin. Deacetylated at Lys-49 and Lys-87 by HDAC1. Acetylation at Lys-685 by EP300/p300 promotes its homodimerization and activation. Deacetylated at Lys-685 by HDAC3. Acetylated on lysine residues by CREBBP. Deacetylation by LOXL3 leads to disrupt STAT3 dimerization and inhibit STAT3 transcription activity. Oxidation of lysine residues to allysine on STAT3 preferentially takes place on lysine residues that are acetylated. Some lysine residues are oxidized to allysine by LOXL3, leading to disrupt STAT3 dimerization and inhibit STAT3 transcription activity. Oxidation of lysine residues to allysine on STAT3 preferentially takes place on lysine residues that are acetylated. In terms of processing, (Microbial infection) Phosphorylated on Tyr-705 in the presence of S.typhimurium SarA. As to expression, expressed in ventricular cardiomyocytes (at protein level). Expressed in the lung (at protein level). Expressed in the liver, spleen and kidney. In terms of tissue distribution, expressed in the liver.

The protein resides in the cytoplasm. It localises to the nucleus. In terms of biological role, signal transducer and transcription activator that mediates cellular responses to interleukins, KITLG/SCF, LEP and other growth factors. Once activated, recruits coactivators, such as NCOA1 or MED1, to the promoter region of the target gene. May mediate cellular responses to activated FGFR1, FGFR2, FGFR3 and FGFR4. Upon activation of IL6ST/gp130 signaling by interleukin-6 (IL6), binds to the IL6-responsive elements identified in the promoters of various acute-phase protein genes. Activated by IL31 through IL31RA. Acts as a regulator of inflammatory response by regulating differentiation of naive CD4(+) T-cells into T-helper Th17 or regulatory T-cells (Treg): acetylation promotes its transcription activity and cell differentiation while deacetylation and oxidation of lysine residues by LOXL3 inhibits differentiation. Involved in cell cycle regulation by inducing the expression of key genes for the progression from G1 to S phase, such as CCND1. Mediates the effects of LEP on melanocortin production, body energy homeostasis and lactation. May play an apoptotic role by transctivating BIRC5 expression under LEP activation. Cytoplasmic STAT3 represses macroautophagy by inhibiting EIF2AK2/PKR activity. Plays a crucial role in basal beta cell functions, such as regulation of insulin secretion. Following JAK/STAT signaling activation and as part of a complex with NFATC3 and NFATC4, binds to the alpha-beta E4 promoter region of CRYAB and activates transcription in cardiomyocytes. Plays an important role in host defense in methicillin-resistant S.aureus lung infection by regulating the expression of the antimicrobial lectin REG3G. This is Signal transducer and activator of transcription 3 from Mus musculus (Mouse).